Reading from the N-terminus, the 919-residue chain is Valine--tRNA ligase (919 aa).

The short motif at 46–56 is the 'HIGH' region element; the sequence is PNVTGTLHMGH. A 'KMSKS' region motif is present at residues 528-532; it reads KMSKS. Lys-531 contributes to the ATP binding site. A coiled-coil region spans residues 849-919; the sequence is LAGLVDIEAE…KTLEKKEALG (71 aa).

This sequence belongs to the class-I aminoacyl-tRNA synthetase family. ValS type 1 subfamily. Monomer.

Its subcellular location is the cytoplasm. It carries out the reaction tRNA(Val) + L-valine + ATP = L-valyl-tRNA(Val) + AMP + diphosphate. Its function is as follows. Catalyzes the attachment of valine to tRNA(Val). As ValRS can inadvertently accommodate and process structurally similar amino acids such as threonine, to avoid such errors, it has a 'posttransfer' editing activity that hydrolyzes mischarged Thr-tRNA(Val) in a tRNA-dependent manner. This chain is Valine--tRNA ligase, found in Francisella tularensis subsp. tularensis (strain SCHU S4 / Schu 4).